The sequence spans 680 residues: Lipase 1 (680 aa).

An N-terminal signal peptide occupies residues 1-34 (MKSQNKYSIRKFSVGASSILIATLLFLSGGQAQA). Residues 35–290 (AEKQVNMGNS…AKAKDDQTNK (256 aa)) constitute a propeptide that is removed on maturation. Residues 82–259 (KNLHNDKTIS…PTKDNDKKNG (178 aa)) form a disordered region. Over residues 84–112 (LHNDKTISEENHRKTDDLNKDQLKDDKKS) the composition is skewed to basic and acidic residues. The span at 125 to 138 (KNNNANPSDVNQGL) shows a compositional bias: polar residues. Low complexity predominate over residues 148-170 (SKVASQQQSKEADNSQDSNANNN). Positions 204 to 223 (QPQQNNQANDKITNYNFNNE) are enriched in polar residues. Residues 224-234 (QEVKPQKDEKT) show a composition bias toward basic and acidic residues. A compositionally biased stretch (polar residues) spans 235–246 (LSVSDLKNNQKS). S408 functions as the Nucleophile in the catalytic mechanism. D600 functions as the Charge relay system in the catalytic mechanism. Residue D638 participates in Ca(2+) binding. H639 (charge relay system) is an active-site residue. Residues D641, D646, and D649 each contribute to the Ca(2+) site.

Belongs to the AB hydrolase superfamily. Lipase family.

Its subcellular location is the secreted. The catalysed reaction is a triacylglycerol + H2O = a diacylglycerol + a fatty acid + H(+). This chain is Lipase 1 (lip1), found in Staphylococcus aureus (strain MSSA476).